The primary structure comprises 232 residues: 7-cyano-7-deazaguanine synthase (232 aa).

Residue phenylalanine 8–leucine 18 coordinates ATP. Positions 187, 196, 199, and 202 each coordinate Zn(2+).

The protein belongs to the QueC family. Zn(2+) is required as a cofactor.

The catalysed reaction is 7-carboxy-7-deazaguanine + NH4(+) + ATP = 7-cyano-7-deazaguanine + ADP + phosphate + H2O + H(+). The protein operates within purine metabolism; 7-cyano-7-deazaguanine biosynthesis. Functionally, catalyzes the ATP-dependent conversion of 7-carboxy-7-deazaguanine (CDG) to 7-cyano-7-deazaguanine (preQ(0)). This is 7-cyano-7-deazaguanine synthase from Vibrio campbellii (strain ATCC BAA-1116).